The chain runs to 485 residues: NADH-quinone oxidoreductase subunit N (485 aa).

A run of 14 helical transmembrane segments spans residues 8–28 (LIAL…MLSI), 35–55 (FLNA…LWFV), 75–95 (LYTG…YPWL), 105–125 (FYLL…ANHL), 127–147 (ALFL…GYAF), 159–179 (YTIL…LVYA), 203–223 (LLAG…LVPF), 235–255 (PAPV…GVVM), 271–291 (VVLG…ALSQ), 297–317 (LLGY…IALQ), 326–346 (VGVY…VVSL), 374–394 (AVMT…GFIG), 408–430 (WWLV…RVAV), and 455–475 (IVVL…QPLI).

It belongs to the complex I subunit 2 family. In terms of assembly, NDH-1 is composed of 13 different subunits. Subunits NuoA, H, J, K, L, M, N constitute the membrane sector of the complex.

The protein resides in the cell inner membrane. It catalyses the reaction a quinone + NADH + 5 H(+)(in) = a quinol + NAD(+) + 4 H(+)(out). NDH-1 shuttles electrons from NADH, via FMN and iron-sulfur (Fe-S) centers, to quinones in the respiratory chain. The immediate electron acceptor for the enzyme in this species is believed to be ubiquinone. Couples the redox reaction to proton translocation (for every two electrons transferred, four hydrogen ions are translocated across the cytoplasmic membrane), and thus conserves the redox energy in a proton gradient. This is NADH-quinone oxidoreductase subunit N from Klebsiella pneumoniae (strain 342).